A 688-amino-acid chain; its full sequence is Phosphatidylinositol 4-phosphate 5-kinase type-1 gamma (688 aa).

Positions 48-71 (GQPGPGHGKKLGHRGVDASGETTY) are disordered. Positions 75 to 443 (TSSTLKGAIQ…RFFKFMSSTV (369 aa)) constitute a PIPK domain. An N6-acetyllysine mark is found at Lys265 and Lys268. Arg459 carries the post-translational modification Asymmetric dimethylarginine; alternate. The residue at position 459 (Arg459) is an Omega-N-methylarginine; alternate. Low complexity predominate over residues 525–534 (TTLSSTSLSI). Disordered stretches follow at residues 525–565 (TTLS…QEEL) and 592–629 (GAGV…EEDA). At Ser554 the chain carries Phosphoserine. Over residues 602-623 (ASAAATVEVDAASQASEPASQA) the composition is skewed to low complexity. Tyr635 is subject to Phosphotyrosine; by EGFR. Tyr671 carries the phosphotyrosine; by CSK modification. Ser672 carries the phosphoserine; by CDK5, MAPK1 and CDK1 modification. A phosphoserine mark is found at Ser682 and Ser686. Phosphothreonine is present on Thr688.

Interacts with TLN1. Interacts with TLN2; interaction stimulates 1-phosphatidylinositol-4-phosphate 5-kinase activity. May compete with beta-integrins for the same binding site on TLN1 and TLN2. Interacts with ARF6; interaction stimulates 1-phosphatidylinositol-4-phosphate 5-kinase activity. Interacts with AP2B1. Interacts with AP2M1; phosphorylation of PIP5K1C by CSK disrupts the interaction; clathrin competes with PIP5K1C. Interacts with CDH1. Interacts with CSK. Interacts with PLCG1; interaction is abolished upon EGF stimulation. Interacts with LAPTM4B; promotes SNX5 association with LAPTM4B; kinase activity of PIP5K1C is required; interaction is regulated by phosphatidylinositol 4,5-bisphosphate generated by PIP5K1C. Post-translationally, phosphorylation on Ser-672 negatively regulates binding to TLN2 and is strongly stimulated in mitosis. Phosphorylation on Tyr-671 is necessary for targeting to focal adhesions. Phosphorylation on Ser-672 and Tyr-671 are mutually exclusive. Phosphorylated by SYK and CSK. Tyrosine phosphorylation is enhanced by PTK2 signaling. Phosphorylated at Tyr-635 upon EGF stimulation. Some studies suggest that phosphorylation on Tyr-671 enhances binding to tailins (TLN1 and TLN2); others that phosphorylation at Tyr-671 does not directly enhance binding to tailins (TLN1 and TLN2) but may act indirectly by inhibiting phosphorylation at Ser-672. Acetylation at Lys-265 and Lys-268 seems to decrease lipid kinase activity. Deacetylation of these sites by SIRT1 positively regulates the exocytosis of TSH-containing granules from pituitary cells.

It localises to the cell membrane. The protein resides in the endomembrane system. The protein localises to the cytoplasm. It is found in the cell junction. Its subcellular location is the focal adhesion. It localises to the adherens junction. The protein resides in the cell projection. The protein localises to the ruffle membrane. It is found in the phagocytic cup. Its subcellular location is the uropodium. The enzyme catalyses a 1,2-diacyl-sn-glycero-3-phospho-(1D-myo-inositol 4-phosphate) + ATP = a 1,2-diacyl-sn-glycero-3-phospho-(1D-myo-inositol-4,5-bisphosphate) + ADP + H(+). It catalyses the reaction 1-octadecanoyl-2-(5Z,8Z,11Z,14Z)-eicosatetraenoyl-sn-glycero-3-phospho-1D-myo-inositol 4-phosphate + ATP = 1-octadecanoyl-2-(5Z,8Z,11Z,14Z)-eicosatetraenoyl-sn-glycero-3-phospho-1D-myo-inositol 4,5-bisphosphate + ADP + H(+). It carries out the reaction 1-octadecanoyl-2-(9Z)-octadecenoyl-sn-glycero-3-phospho-1D-myo-inositol 4-phosphate + ATP = 1-octadecanoyl-2-(9Z)-octadecenoyl-sn-glycero-3-phospho-1D-myo-inositol 4,5-bisphosphate + ADP + H(+). The catalysed reaction is 1-octadecanoyl-2-(9Z)-octadecenoyl-sn-glycero-3-phospho-1D-myo-inositol + ATP = 1-octadecanoyl-2-(9Z)-octadecenoyl-sn-glycero-3-phospho-1D-myo-inositol 5-phosphate + ADP + H(+). The enzyme catalyses 1-octadecanoyl-2-(9Z,12Z)-octadecadienoyl-sn-glycero-3-phospho-1D-myo-inositol + ATP = 1-octadecanoyl-2-(9Z,12Z)-octadecadienoyl-sn-glycero-3-phospho-1D-myo-inositol 5-phosphate + ADP + H(+). It catalyses the reaction 1-octadecanoyl-2-(5Z,8Z,11Z,14Z-eicosatetraenoyl)-sn-glycero-3-phospho-(1D-myo-inositol) + ATP = 1-octadecanoyl-2-(5Z,8Z,11Z,14Z)-eicosatetraenoyl-sn-glycero-3-phospho-1D-myo-inositol 5-phosphate + ADP + H(+). It carries out the reaction 1,2-di-(9Z,12Z)-octadecadienoyl-sn-glycero-3-phospho-1D-myo-inositol + ATP = 1,2-di(9Z,12Z)-octadecadienoyl-sn-glycero-3-phospho-1D-myo-inositol 5-phosphate + ADP + H(+). Functionally, catalyzes the phosphorylation of phosphatidylinositol 4-phosphate (PtdIns(4)P/PI4P) to form phosphatidylinositol 4,5-bisphosphate (PtdIns(4,5)P2/PIP2), a lipid second messenger that regulates several cellular processes such as signal transduction, vesicle trafficking, actin cytoskeleton dynamics, cell adhesion, and cell motility. PtdIns(4,5)P2 can directly act as a second messenger or can be utilized as a precursor to generate other second messengers: inositol 1,4,5-trisphosphate (IP3), diacylglycerol (DAG) or phosphatidylinositol-3,4,5-trisphosphate (PtdIns(3,4,5)P3/PIP3). PIP5K1A-mediated phosphorylation of PtdIns(4)P is the predominant pathway for PtdIns(4,5)P2 synthesis. Together with PIP5K1A, is required for phagocytosis, both enzymes regulating different types of actin remodeling at sequential steps. Promotes particle attachment by generating the pool of PtdIns(4,5)P2 that induces controlled actin depolymerization to facilitate Fc-gamma-R clustering. Mediates RAC1-dependent reorganization of actin filaments. Required for synaptic vesicle transport. Controls the plasma membrane pool of PtdIns(4,5)P2 implicated in synaptic vesicle endocytosis and exocytosis. Plays a role in endocytosis mediated by clathrin and AP-2 (adaptor protein complex 2). Required for clathrin-coated pits assembly at the synapse. Participates in cell junction assembly. Modulates adherens junctions formation by facilitating CDH1/cadherin trafficking. Required for focal adhesion dynamics. Modulates the targeting of talins (TLN1 and TLN2) to the plasma membrane and their efficient assembly into focal adhesions. Regulates the interaction between talins (TLN1 and TLN2) and beta-integrins. Required for uropodium formation and retraction of the cell rear during directed migration. Has a role in growth factor-stimulated directional cell migration and adhesion. Required for talin assembly into nascent adhesions forming at the leading edge toward the direction of the growth factor. Negative regulator of T-cell activation and adhesion. Negatively regulates integrin alpha-L/beta-2 (LFA-1) polarization and adhesion induced by T-cell receptor. Together with PIP5K1A has a role during embryogenesis and together with PIP5K1B may have a role immediately after birth. This Rattus norvegicus (Rat) protein is Phosphatidylinositol 4-phosphate 5-kinase type-1 gamma.